Consider the following 105-residue polypeptide: Phosphoribosyl-AMP cyclohydrolase (105 aa).

D72 provides a ligand contact to Mg(2+). C73 lines the Zn(2+) pocket. D74 and D76 together coordinate Mg(2+). Zn(2+)-binding residues include C89 and C96.

Belongs to the PRA-CH family. In terms of assembly, homodimer. The cofactor is Mg(2+). It depends on Zn(2+) as a cofactor.

It localises to the cytoplasm. The enzyme catalyses 1-(5-phospho-beta-D-ribosyl)-5'-AMP + H2O = 1-(5-phospho-beta-D-ribosyl)-5-[(5-phospho-beta-D-ribosylamino)methylideneamino]imidazole-4-carboxamide. It participates in amino-acid biosynthesis; L-histidine biosynthesis; L-histidine from 5-phospho-alpha-D-ribose 1-diphosphate: step 3/9. Its function is as follows. Catalyzes the hydrolysis of the adenine ring of phosphoribosyl-AMP. In Listeria monocytogenes serotype 4a (strain HCC23), this protein is Phosphoribosyl-AMP cyclohydrolase.